The primary structure comprises 252 residues: Chitooligosaccharide deacetylase (252 aa).

Mg(2+) is bound by residues His-61 and His-125.

The protein belongs to the YdjC deacetylase family. ChbG subfamily. Homodimer. The cofactor is Mg(2+).

It is found in the cytoplasm. The enzyme catalyses N,N'-diacetylchitobiose + H2O = N-acetyl-beta-D-glucosaminyl-(1-&gt;4)-D-glucosamine + acetate. It carries out the reaction diacetylchitobiose-6'-phosphate + H2O = N'-monoacetylchitobiose-6'-phosphate + acetate. It functions in the pathway glycan degradation; chitin degradation. Involved in the degradation of chitin. ChbG is essential for growth on the acetylated chitooligosaccharides chitobiose and chitotriose but is dispensable for growth on cellobiose and chitosan dimer, the deacetylated form of chitobiose. Deacetylation of chitobiose-6-P and chitotriose-6-P is necessary for both the activation of the chb promoter by the regulatory protein ChbR and the hydrolysis of phosphorylated beta-glucosides by the phospho-beta-glucosidase ChbF. Catalyzes the removal of only one acetyl group from chitobiose-6-P to yield monoacetylchitobiose-6-P, the inducer of ChbR and the substrate of ChbF. The protein is Chitooligosaccharide deacetylase of Escherichia coli (strain 55989 / EAEC).